The following is a 304-amino-acid chain: MTASDFQHQTVLLREAVDLLRPADGRVIIDGTLGGGGHSEALLASGATVVGVDRDPVALAAATARLGANPRFQGRAGNFAELPRVAADLLPVDGVLVDLGVSSPQLDVAERGFSFSKDGPLDMRMGPDGPTAAELIATTDERELVRILKDYGEEPFARPIARELKKALPTRTLEAAEVVKRAVPRKAWPNRIHVATRTFQALRMAVNGELEALDALLAAIPGLLKVGGRAAVIAFHSLEDRKVKEAFRALAGRCTCPPGLPVCVCSGVGDFALVTKKAVAASEAEVEANPRSRSAHLRVVEKLR.

Residues 36–38, Asp53, Phe79, Asp98, and Gln105 contribute to the S-adenosyl-L-methionine site; that span reads GGH.

The protein belongs to the methyltransferase superfamily. RsmH family.

The protein localises to the cytoplasm. The enzyme catalyses cytidine(1402) in 16S rRNA + S-adenosyl-L-methionine = N(4)-methylcytidine(1402) in 16S rRNA + S-adenosyl-L-homocysteine + H(+). Functionally, specifically methylates the N4 position of cytidine in position 1402 (C1402) of 16S rRNA. The protein is Ribosomal RNA small subunit methyltransferase H of Myxococcus xanthus (strain DK1622).